The chain runs to 94 residues: Dynein light chain, cytoplasmic (94 aa).

The protein belongs to the dynein light chain family. In terms of assembly, homodimer. Cytoplasmic dynein consists of two catalytic heavy chains (HCs) and a number of non-catalytic subunits which present intermediate chains (ICs), light intermediate chains (LICs) and light chains (LCs). Component of the nuclear pore complex (NPC). The nuclear pore complex constitutes the exclusive means of nucleocytoplasmic transport. NPCs allow the passive diffusion of ions and small molecules and the active, nuclear transport receptor-mediated bidirectional transport of macromolecules such as proteins, RNAs, ribonucleoparticles (RNPs), and ribosomal subunits across the nuclear envelope. Due to its 8-fold rotational symmetry, all subunits are present with 8 copies or multiples thereof.

Its subcellular location is the cytoplasm. It is found in the cytoskeleton. The protein localises to the nucleus. The protein resides in the nuclear pore complex. Its function is as follows. Acts as one of several non-catalytic accessory components of the cytoplasmic dynein complex that are thought to be involved in linking dynein to cargos and to adapter proteins that regulate dynein function. Cytoplasmic dynein 1 acts as a motor for the intracellular retrograde motility of vesicles and organelles along microtubules. May play a role in changing or maintaining the spatial distribution of cytoskeletal structures. Also a component of the nuclear pore complex. This Emericella nidulans (strain FGSC A4 / ATCC 38163 / CBS 112.46 / NRRL 194 / M139) (Aspergillus nidulans) protein is Dynein light chain, cytoplasmic (nudG).